The primary structure comprises 447 residues: Zinc finger protein ZIC 1 (447 aa).

The C2H2-type 1; atypical zinc-finger motif lies at 225–260 (LICKWIEPEQLANPKKSCNKTFSTMHELVTHVTVEH). The segment at 269–296 (HICFWEECPREGKPFKAKYKLVNHIRVH) adopts a C2H2-type 2; atypical zinc-finger fold. 3 consecutive C2H2-type zinc fingers follow at residues 302–326 (FPCP…KRTH), 332–356 (FKCE…MHVH), and 362–384 (YLCK…MKVH). The tract at residues 375–434 (SSLRKHMKVHESSSQGSQPSPAASSGYESSTPPTIVSPTTDNPTTSSMSPSSSAVHHTAG) is disordered. Residues 386–427 (SSSQGSQPSPAASSGYESSTPPTIVSPTTDNPTTSSMSPSSS) show a composition bias toward low complexity.

It belongs to the GLI C2H2-type zinc-finger protein family. Interacts (via the C2H2-type domains 3, 4 and 5) with MDFIC (via the C2H2-type domains 3, 4 and 5). Interacts with GLI1; the interaction enhances transcription activation. Interacts with GLI2. Interacts with GLI3; the interaction enhances transcription activation. Expressed in osteoblasts (at protein level). Expressed in the CNS. A high level expression is seen in the cerebellum, while a low level expression is seen in the olfactory bulb, diencephalon, and brainstem. Expressed in lumbar spine and iliac crest.

The protein localises to the nucleus. It is found in the cytoplasm. In terms of biological role, acts as a transcriptional activator. Involved in neurogenesis. Plays important roles in the early stage of organogenesis of the CNS, as well as during dorsal spinal cord development and maturation of the cerebellum. Involved in the spatial distribution of mossy fiber (MF) neurons within the pontine gray nucleus (PGN). Plays a role in the regulation of MF axon pathway choice. Promotes MF migration towards ipsilaterally-located cerebellar territories. May have a role in shear flow mechanotransduction in osteocytes. Retains nuclear GLI1 and GLI3 in the cytoplasm. Binds to the minimal GLI-consensus sequence 5'-TGGGTGGTC-3'. This chain is Zinc finger protein ZIC 1 (Zic1), found in Mus musculus (Mouse).